Here is a 907-residue protein sequence, read N- to C-terminus: Phototropin-2 (907 aa).

Residues 28-84 (ATAGLEIVAEDAPSGSSGAHQQQAWRPVAPATAGRDSGGTGSGKSSVDGGVGRASHD) are disordered. Positions 41-51 (SGSSGAHQQQA) are enriched in polar residues. Positions 89–162 (VSQELKDALS…AKIRDAVKHG (74 aa)) constitute a PAS 1 domain. Residues 138–143 (NCRFLQ), R156, N171, N181, and Q202 each bind FMN. S-4a-FMN cysteine is present on C139. One can recognise a PAC 1 domain in the interval 163 to 217 (RSFCGRLLNYRKDGAPFWNLLTVTPIRDDNGKVIKFIGMQVEVSKYTEGLSDKRM). The segment at 332 to 363 (RSSVGSREAPAVVEEPAPAPPPAPEVVERTDS) is disordered. A PAS 2 domain is found at 375–448 (QGIDLATTLE…DKIREAIREQ (74 aa)). FMN-binding positions include 424–429 (NCRFLQ), R442, N457, N467, and Q488. The residue at position 425 (C425) is an S-4a-FMN cysteine. The PAC 2 domain occupies 449-503 (KEITVQLINYTKSGKKFWNLFHLQPMRDQKGELQYFIGVQLDGSDHVEPLRNRLS). In terms of domain architecture, Protein kinase spans 576–863 (FKPVKPLGCG…ANDIKQHSFF (288 aa)). ATP contacts are provided by residues 582–590 (LGCGDTGSV) and K605. The active-site Proton acceptor is the D701.

It belongs to the protein kinase superfamily. Ser/Thr protein kinase family. In terms of assembly, homodimer. Requires FMN as cofactor. Post-translationally, autophosphorylated in response to blue light irradiation. In terms of processing, 2 molecules of FMN bind covalently to cysteines after exposure to blue light and are reversed in the dark. As to expression, expressed at low levels in leaves of dark-grown seedlings.

It catalyses the reaction L-seryl-[protein] + ATP = O-phospho-L-seryl-[protein] + ADP + H(+). The enzyme catalyses L-threonyl-[protein] + ATP = O-phospho-L-threonyl-[protein] + ADP + H(+). In terms of biological role, protein kinase that acts as a blue light photoreceptor in a signal-transduction pathway for phototropic responses. Regulates a wide range of physiological activities in plants that maximize the efficiency of photosynthesis, such as chloroplast relocations, stomata opening, and leaf expansion. The chain is Phototropin-2 (PHOT2) from Oryza sativa subsp. japonica (Rice).